A 315-amino-acid chain; its full sequence is ATP synthase gamma chain (315 aa).

The protein belongs to the ATPase gamma chain family. F-type ATPases have 2 components, CF(1) - the catalytic core - and CF(0) - the membrane proton channel. CF(1) has five subunits: alpha(3), beta(3), gamma(1), delta(1), epsilon(1). CF(0) has three main subunits: a, b and c.

It is found in the cellular thylakoid membrane. Produces ATP from ADP in the presence of a proton gradient across the membrane. The gamma chain is believed to be important in regulating ATPase activity and the flow of protons through the CF(0) complex. The protein is ATP synthase gamma chain of Cyanothece sp. (strain PCC 7425 / ATCC 29141).